Consider the following 260-residue polypeptide: Ava biosynthesis cluster protein M (260 aa).

A signal peptide spans 1–15; that stretch reads MKVLVLGLCRTGTSS.

The protein belongs to the cytochrome P450 family.

The protein operates within secondary metabolite biosynthesis. Part of the cluster that mediates the biosynthesis of a highly modified cyclo-arginine-tryptophan dipeptide (cRW). The first step of the pathway is perfornmed by the arginine-containing cyclodipeptide synthase (RCPDS) avaA that acts as the scaffold-generating enzyme and is responsible for formation of the cyclo-Arg-Trp (cRW) diketopiperazine. AvaB then acts as a multifunctional flavoenzyme that is responsible for generating the cyclo-Arg-formylkynurenine DKP, which can be deformylated by avaC. AvaB then further catalyzes an additional N-oxidation followed by cyclization and dehydration. The next step is an N-acetylation of the guanidine group catalyzed by the arginine N-acetyltransferase avaD. The roles of the additional enzymes identified within the ava cluster still have to be determined. The chain is Ava biosynthesis cluster protein M from Aspergillus versicolor.